A 212-amino-acid polypeptide reads, in one-letter code: Thymidylate kinase (212 aa).

Glycine 9–threonine 16 is a binding site for ATP.

The protein belongs to the thymidylate kinase family.

The enzyme catalyses dTMP + ATP = dTDP + ADP. In terms of biological role, phosphorylation of dTMP to form dTDP in both de novo and salvage pathways of dTTP synthesis. This is Thymidylate kinase from Synechococcus sp. (strain CC9311).